The chain runs to 274 residues: Sulfur carrier protein FdhD (274 aa).

C121 (cysteine persulfide intermediate) is an active-site residue. Mo-bis(molybdopterin guanine dinucleotide) is bound at residue 258–263 (FSKPGR).

Belongs to the FdhD family.

It localises to the cytoplasm. Its function is as follows. Required for formate dehydrogenase (FDH) activity. Acts as a sulfur carrier protein that transfers sulfur from IscS to the molybdenum cofactor prior to its insertion into FDH. In Yersinia pseudotuberculosis serotype IB (strain PB1/+), this protein is Sulfur carrier protein FdhD.